A 220-amino-acid chain; its full sequence is uncharacterized protein (220 aa).

Belongs to the DadA oxidoreductase family. Requires FAD as cofactor.

This is an uncharacterized protein from Halorhodospira halophila (Ectothiorhodospira halophila).